A 338-amino-acid chain; its full sequence is tRNA N6-adenosine threonylcarbamoyltransferase (338 aa).

The Fe cation site is built by histidine 109 and histidine 113. Residues 132–136 (AISGA), aspartate 165, glycine 178, and asparagine 277 each bind substrate. Aspartate 302 is a binding site for Fe cation.

The protein belongs to the KAE1 / TsaD family. It depends on Fe(2+) as a cofactor.

Its subcellular location is the cytoplasm. It carries out the reaction L-threonylcarbamoyladenylate + adenosine(37) in tRNA = N(6)-L-threonylcarbamoyladenosine(37) in tRNA + AMP + H(+). Required for the formation of a threonylcarbamoyl group on adenosine at position 37 (t(6)A37) in tRNAs that read codons beginning with adenine. Is involved in the transfer of the threonylcarbamoyl moiety of threonylcarbamoyl-AMP (TC-AMP) to the N6 group of A37, together with TsaE and TsaB. TsaD likely plays a direct catalytic role in this reaction. This is tRNA N6-adenosine threonylcarbamoyltransferase from Chlamydia trachomatis serovar L2b (strain UCH-1/proctitis).